The primary structure comprises 79 residues: ATP synthase subunit c (79 aa).

Transmembrane regions (helical) follow at residues 11–31 and 53–73; these read MAAAIMMGLAAIGAAIGIGIL and FFIVMGLVDAIPMIAVGLGLY.

The protein belongs to the ATPase C chain family. As to quaternary structure, F-type ATPases have 2 components, F(1) - the catalytic core - and F(0) - the membrane proton channel. F(1) has five subunits: alpha(3), beta(3), gamma(1), delta(1), epsilon(1). F(0) has three main subunits: a(1), b(2) and c(10-14). The alpha and beta chains form an alternating ring which encloses part of the gamma chain. F(1) is attached to F(0) by a central stalk formed by the gamma and epsilon chains, while a peripheral stalk is formed by the delta and b chains.

It localises to the cell inner membrane. F(1)F(0) ATP synthase produces ATP from ADP in the presence of a proton or sodium gradient. F-type ATPases consist of two structural domains, F(1) containing the extramembraneous catalytic core and F(0) containing the membrane proton channel, linked together by a central stalk and a peripheral stalk. During catalysis, ATP synthesis in the catalytic domain of F(1) is coupled via a rotary mechanism of the central stalk subunits to proton translocation. Its function is as follows. Key component of the F(0) channel; it plays a direct role in translocation across the membrane. A homomeric c-ring of between 10-14 subunits forms the central stalk rotor element with the F(1) delta and epsilon subunits. The protein is ATP synthase subunit c of Proteus mirabilis (strain HI4320).